Reading from the N-terminus, the 364-residue chain is Aminomethyltransferase (364 aa).

It belongs to the GcvT family. In terms of assembly, the glycine cleavage system is composed of four proteins: P, T, L and H.

It carries out the reaction N(6)-[(R)-S(8)-aminomethyldihydrolipoyl]-L-lysyl-[protein] + (6S)-5,6,7,8-tetrahydrofolate = N(6)-[(R)-dihydrolipoyl]-L-lysyl-[protein] + (6R)-5,10-methylene-5,6,7,8-tetrahydrofolate + NH4(+). Functionally, the glycine cleavage system catalyzes the degradation of glycine. In Shewanella woodyi (strain ATCC 51908 / MS32), this protein is Aminomethyltransferase.